The following is a 373-amino-acid chain: Anhydro-N-acetylmuramic acid kinase (373 aa).

12 to 19 (GTSLDGVD) provides a ligand contact to ATP.

This sequence belongs to the anhydro-N-acetylmuramic acid kinase family.

The enzyme catalyses 1,6-anhydro-N-acetyl-beta-muramate + ATP + H2O = N-acetyl-D-muramate 6-phosphate + ADP + H(+). It functions in the pathway amino-sugar metabolism; 1,6-anhydro-N-acetylmuramate degradation. It participates in cell wall biogenesis; peptidoglycan recycling. In terms of biological role, catalyzes the specific phosphorylation of 1,6-anhydro-N-acetylmuramic acid (anhMurNAc) with the simultaneous cleavage of the 1,6-anhydro ring, generating MurNAc-6-P. Is required for the utilization of anhMurNAc either imported from the medium or derived from its own cell wall murein, and thus plays a role in cell wall recycling. The protein is Anhydro-N-acetylmuramic acid kinase of Salmonella paratyphi A (strain ATCC 9150 / SARB42).